Consider the following 223-residue polypeptide: Deoxyribose-phosphate aldolase 2 (223 aa).

Asp92 serves as the catalytic Proton donor/acceptor. Lys154 functions as the Schiff-base intermediate with acetaldehyde in the catalytic mechanism. The active-site Proton donor/acceptor is Lys183.

Belongs to the DeoC/FbaB aldolase family. DeoC type 1 subfamily.

It is found in the cytoplasm. It carries out the reaction 2-deoxy-D-ribose 5-phosphate = D-glyceraldehyde 3-phosphate + acetaldehyde. It participates in carbohydrate degradation; 2-deoxy-D-ribose 1-phosphate degradation; D-glyceraldehyde 3-phosphate and acetaldehyde from 2-deoxy-alpha-D-ribose 1-phosphate: step 2/2. In terms of biological role, catalyzes a reversible aldol reaction between acetaldehyde and D-glyceraldehyde 3-phosphate to generate 2-deoxy-D-ribose 5-phosphate. This Oceanobacillus iheyensis (strain DSM 14371 / CIP 107618 / JCM 11309 / KCTC 3954 / HTE831) protein is Deoxyribose-phosphate aldolase 2.